A 195-amino-acid chain; its full sequence is Transcription repressor OFP17 (195 aa).

An OVATE domain is found at 130–190; the sequence is EDNAVEDACR…SRFYGELCRD (61 aa).

Its subcellular location is the nucleus. Functionally, transcriptional repressor that may regulate multiple aspects of plant growth and development through the regulation of BEL1-LIKE (BLH) and KNOX TALE (KNAT) homeodomain transcription factors. The protein is Transcription repressor OFP17 (OFP17) of Arabidopsis thaliana (Mouse-ear cress).